The primary structure comprises 162 residues: Shikimate kinase (162 aa).

11–16 contributes to the ATP binding site; it reads GSGKSS. Residue serine 15 participates in Mg(2+) binding. 3 residues coordinate substrate: aspartate 33, arginine 57, and glycine 80. An ATP-binding site is contributed by arginine 116. Arginine 132 contributes to the substrate binding site.

This sequence belongs to the shikimate kinase family. As to quaternary structure, monomer. It depends on Mg(2+) as a cofactor.

It localises to the cytoplasm. It carries out the reaction shikimate + ATP = 3-phosphoshikimate + ADP + H(+). The protein operates within metabolic intermediate biosynthesis; chorismate biosynthesis; chorismate from D-erythrose 4-phosphate and phosphoenolpyruvate: step 5/7. Its function is as follows. Catalyzes the specific phosphorylation of the 3-hydroxyl group of shikimic acid using ATP as a cosubstrate. The chain is Shikimate kinase from Helicobacter pylori (strain P12).